The chain runs to 116 residues: Large ribosomal subunit protein uL18 (116 aa).

Belongs to the universal ribosomal protein uL18 family. As to quaternary structure, part of the 50S ribosomal subunit; part of the 5S rRNA/L5/L18/L25 subcomplex. Contacts the 5S and 23S rRNAs.

Its function is as follows. This is one of the proteins that bind and probably mediate the attachment of the 5S RNA into the large ribosomal subunit, where it forms part of the central protuberance. The chain is Large ribosomal subunit protein uL18 from Pseudomonas fluorescens (strain SBW25).